A 507-amino-acid polypeptide reads, in one-letter code: Cobyric acid synthase (507 aa).

The GATase cobBQ-type domain occupies 251–448 (DIDIAVVHLP…LHGLFDSDAF (198 aa)). The active-site Nucleophile is the C332. H440 is a catalytic residue.

Belongs to the CobB/CobQ family. CobQ subfamily.

The protein operates within cofactor biosynthesis; adenosylcobalamin biosynthesis. In terms of biological role, catalyzes amidations at positions B, D, E, and G on adenosylcobyrinic A,C-diamide. NH(2) groups are provided by glutamine, and one molecule of ATP is hydrogenolyzed for each amidation. The chain is Cobyric acid synthase from Klebsiella pneumoniae (strain 342).